Here is a 1414-residue protein sequence, read N- to C-terminus: MRDLVKQLKSEKHTAEFDALRIKLASPEEVRSWSYGEVKKPETINYRTFKPEREGLFCAKIFGPIKDYECLCGKYKRLKHRGVICEKCGVEVTLAKVRRERMGHIELASPVAHIWYLKSLPSRIGLLLDVTLRDIERILYFEAYVVVDPGMTDLEPRQLLSEEAYLDALEEYGDDFTALMGAEAIQRLLRDIDVEAEVEALRTELQTTTSETKTKKLTKRLKVLSAFLESGNKPEWMILTVLPVLPPDLRPLVPLDGGRFATSDLNDLYRRVINRNNRLKRLLDLNAPDIIVRNEKRMLQEAVDALLDNGRRGRAILGSNRRQLKSLADMIKGKSGRFRQNLLGKRVDYSGRSVIVVGPTLKLHQAGLPKKMALELFKPFIFSKLQLRGLATTVKAAKKLVENEGPEVWDILEEVIREHPILLNRAPTLHRLGIQAFEPVLVEGKAIQLHPLVCTAYNADFDGDQMAVHVPLTLEAQLEARSLMMSTNNVLHPANGEPIIVPSQDVVLGLYYITRDRVNAKGEGMRFADAQEVVRAYENDQVDLHARITVRIKEGILNEAGEIEESDRLVNTAAGRILLWQIVPKGLPFALVDQPMTKKAVTKLLDFCYRNLGLKTTVIFADKLMYMGFHYATHSGVSIGINDLVVPDQKEAIISRAEDEVREIEKQYASGLVTHGERRNKVIDIWSRTNDQVAKAMMEKIAVEKVKDAEGKEVAQSSFNSIYMMSDSGARGSAAQTRQLAGMRGLMARPDGTIIETPITANFREGLNVLQYFISTHGARKGLADTALKTANSGYLTRRLVDVAQDLVVTEHDCGTEASIEMMPHIEGGDVVEPLRERVLGRILAEPVMDPKSRKELLAKDTFLDERRVDILEEHSIDRVRVRSAITCEARYGICSMCYGRDLARGHVVNVGEAIGVVAAQSIGEPGTQLTMRTFHIGGAASRATAANNIGVKSTGKIKLRNLKTVEQAQGNLVAVSRSGELVVQDLQGSEREHYKVPYGATISVRDGDSVKAGQIVAQWDPHTHPIITEVAGTLRFVDLVDGVTMNRQTDELTGLSSIVITSTKQRSASGKELRPMVKLVDKNDDDLFLPGGKVPAHYFLPEGTFLTKEDGTTVNIGDVLARIPQETSKTRDITGGLPRVADLFEARRPKDAAILAEISGVVSFGKDTKDKGRLIITAPDGTTHEELIPKWRHVSVFEGETVEKGEVIADGPRDPHDILRLLGVNALANYIVNEVQEVYRLQGVKINDKHIEVIVRQMLRKVKITQPGDTDLLQNEQVERTRVREENEKIIKKDGTVAKVEPILLGITKASLATESFISAASFQETTRVLTAASVAGKRDDLRGLKENVIVGRLIPAGTGFSYHQQRRAVAGKSVEEKEIEEKRVTASEAEQALSEALKSSAPQEAKAAQKDE.

The Zn(2+) site is built by Cys70, Cys72, Cys85, and Cys88. The Mg(2+) site is built by Asp460, Asp462, and Asp464. The Zn(2+) site is built by Cys814, Cys888, Cys895, and Cys898. The span at 1392-1403 (EQALSEALKSSA) shows a compositional bias: low complexity. A disordered region spans residues 1392–1414 (EQALSEALKSSAPQEAKAAQKDE).

Belongs to the RNA polymerase beta' chain family. The RNAP catalytic core consists of 2 alpha, 1 beta, 1 beta' and 1 omega subunit. When a sigma factor is associated with the core the holoenzyme is formed, which can initiate transcription. It depends on Mg(2+) as a cofactor. Requires Zn(2+) as cofactor.

The catalysed reaction is RNA(n) + a ribonucleoside 5'-triphosphate = RNA(n+1) + diphosphate. DNA-dependent RNA polymerase catalyzes the transcription of DNA into RNA using the four ribonucleoside triphosphates as substrates. The polypeptide is DNA-directed RNA polymerase subunit beta' (Coxiella burnetii (strain RSA 331 / Henzerling II)).